Consider the following 501-residue polypeptide: ATP synthase subunit alpha (501 aa).

169 to 176 (GDRQTGKT) is a binding site for ATP.

The protein belongs to the ATPase alpha/beta chains family. F-type ATPases have 2 components, CF(1) - the catalytic core - and CF(0) - the membrane proton channel. CF(1) has five subunits: alpha(3), beta(3), gamma(1), delta(1), epsilon(1). CF(0) has three main subunits: a(1), b(2) and c(9-12). The alpha and beta chains form an alternating ring which encloses part of the gamma chain. CF(1) is attached to CF(0) by a central stalk formed by the gamma and epsilon chains, while a peripheral stalk is formed by the delta and b chains.

The protein localises to the cell membrane. The enzyme catalyses ATP + H2O + 4 H(+)(in) = ADP + phosphate + 5 H(+)(out). Its function is as follows. Produces ATP from ADP in the presence of a proton gradient across the membrane. The alpha chain is a regulatory subunit. The sequence is that of ATP synthase subunit alpha from Streptococcus uberis (strain ATCC BAA-854 / 0140J).